A 166-amino-acid polypeptide reads, in one-letter code: Monothiol glutaredoxin-3 (166 aa).

Positions 56–159 (DSTDFEVFLE…STLDEWTHNK (104 aa)) constitute a Glutaredoxin domain. Cysteine 76 contributes to the [2Fe-2S] cluster binding site.

Belongs to the glutaredoxin family. Monothiol subfamily. In terms of assembly, homodimer.

It localises to the nucleus. Monothiol glutaredoxin involved in the biogenesis of iron-sulfur clusters. Binds one iron-sulfur cluster per dimer. The iron-sulfur cluster is bound between subunits, and is complexed by a bound glutathione and a cysteine residue from each subunit. This Schizosaccharomyces pombe (strain 972 / ATCC 24843) (Fission yeast) protein is Monothiol glutaredoxin-3 (grx3).